The chain runs to 216 residues: Ribosomal RNA small subunit methyltransferase G (216 aa).

Residues Gly81, Leu86, 132-133 (VE), and Arg147 each bind S-adenosyl-L-methionine.

It belongs to the methyltransferase superfamily. RNA methyltransferase RsmG family.

It localises to the cytoplasm. The enzyme catalyses guanosine(527) in 16S rRNA + S-adenosyl-L-methionine = N(7)-methylguanosine(527) in 16S rRNA + S-adenosyl-L-homocysteine. Functionally, specifically methylates the N7 position of guanine in position 527 of 16S rRNA. This Hydrogenovibrio crunogenus (strain DSM 25203 / XCL-2) (Thiomicrospira crunogena) protein is Ribosomal RNA small subunit methyltransferase G.